The following is a 131-amino-acid chain: Small ribosomal subunit protein uS8 (131 aa).

It belongs to the universal ribosomal protein uS8 family. Part of the 30S ribosomal subunit. Contacts proteins S5 and S12.

Functionally, one of the primary rRNA binding proteins, it binds directly to 16S rRNA central domain where it helps coordinate assembly of the platform of the 30S subunit. In Variovorax paradoxus (strain S110), this protein is Small ribosomal subunit protein uS8.